Consider the following 697-residue polypeptide: Elongation factor G (697 aa).

The tr-type G domain maps to 8 to 283 (EHIRNIGICA…AVVDFLPSPT (276 aa)). GTP is bound by residues 17–24 (AHIDAGKT), 81–85 (DTPGH), and 135–138 (NKMD).

Belongs to the TRAFAC class translation factor GTPase superfamily. Classic translation factor GTPase family. EF-G/EF-2 subfamily.

Its subcellular location is the cytoplasm. Catalyzes the GTP-dependent ribosomal translocation step during translation elongation. During this step, the ribosome changes from the pre-translocational (PRE) to the post-translocational (POST) state as the newly formed A-site-bound peptidyl-tRNA and P-site-bound deacylated tRNA move to the P and E sites, respectively. Catalyzes the coordinated movement of the two tRNA molecules, the mRNA and conformational changes in the ribosome. The protein is Elongation factor G of Rickettsia rhipicephali.